The following is a 424-amino-acid chain: Chloroquine resistance transporter (424 aa).

Residues 1–58 are Cytoplasmic-facing; it reads MKFASKKNNQKNSSKNDERYRELDNLVQEGNGSRLGGGSCLGKCAHVFKLIFKEIKDN. A helical membrane pass occupies residues 59–79; that stretch reads IFIYILSIIYLSVCVMNKIFA. Residues 80 to 90 are Vacuolar-facing; it reads KRTLNKIGNYS. N-linked (GlcNAc...) asparagine glycosylation occurs at Asn88. A helical transmembrane segment spans residues 91 to 111; the sequence is FVTSETHNFICMIMFFIVYSL. The Cytoplasmic portion of the chain corresponds to 112–127; that stretch reads FGNKKGNSKERHRSFN. The chain crosses the membrane as a helical span at residues 128 to 148; the sequence is LQFFAISMLDACSVILAFIGL. Residues 149 to 154 are Vacuolar-facing; that stretch reads TRTTGN. Residues 155 to 175 traverse the membrane as a helical segment; it reads IQSFVLQLSIPINMFFCFLIL. Residues 176-178 lie on the Cytoplasmic side of the membrane; sequence RYR. A helical transmembrane segment spans residues 179 to 199; that stretch reads YHLYNYLGAVIIVVTIALVEM. Topologically, residues 200–209 are vacuolar; that stretch reads KLSFETQEEN. A helical transmembrane segment spans residues 210-230; that stretch reads SIIFNLVLISALIPVCFSNMT. Residues 231-248 are Cytoplasmic-facing; it reads REIVFKKYKIDILRLNAM. The helical transmembrane segment at 249–269 threads the bilayer; the sequence is VSFFQLFTSCLILPVYTLPFL. The Vacuolar portion of the chain corresponds to 270-317; the sequence is KQLHLPYNEIWTNIKNGFACLFLGRNTVVENCGLGMAKLCDDCDGAWK. 2 disulfides stabilise this stretch: Cys289–Cys312 and Cys301–Cys309. Residues 318–338 traverse the membrane as a helical segment; that stretch reads TFALFSFFNICDNLITSYIID. Topologically, residues 339–346 are cytoplasmic; the sequence is KFSTMTYT. Residues 347 to 367 traverse the membrane as a helical segment; sequence IVSCIQGPAIAIAYYFKFLAG. Residues 368 to 377 are Vacuolar-facing; it reads DVVREPRLLD. The chain crosses the membrane as a helical span at residues 378 to 398; sequence FVTLFGYLFGSIIYRVGNIIL. Residues 399–424 are Cytoplasmic-facing; sequence ERKKMRNEENEDSEGELTNVDSIITQ.

It belongs to the CRT-like transporter family. Monomer.

It is found in the vacuole membrane. The catalysed reaction is L-arginine(in) = L-arginine(out). It catalyses the reaction L-lysine(in) = L-lysine(out). The enzyme catalyses L-histidine(out) = L-histidine(in). It carries out the reaction histamine(out) = histamine(in). The catalysed reaction is spermidine(in) = spermidine(out). It catalyses the reaction Fe(3+)(in) = Fe(3+)(out). The enzyme catalyses Fe(2+)(in) = Fe(2+)(out). With respect to regulation, transporter activity is trans-stimulated by host-derived peptides containing 4-11 amino acids. Trans-stimulation by hemoglobin-derived peptide VDPVNF is pH-dependent and sodium-independent. Saquinavir trans-stimulates transport of hemoglobin-derived peptide VDPVNF. Protons are non-competitive inhibitors of chloroquine transport. Functionally, nutrient transporter. Substrate transport is pH-dependent. Can transport arginine, lysine, histidine, peptides, histamine and spermidine. May modulate activity of endogenous transporters. Involved in maintaining the osmotic homeostasis of the digestive vacuole. Required for the asexual intraerythrocytic proliferation of parasites. Can transport Fe(2+) and Fe(3+). This is Chloroquine resistance transporter from Plasmodium falciparum.